Here is a 141-residue protein sequence, read N- to C-terminus: Heavy metal-associated isoprenylated plant protein 29 (141 aa).

Positions 1-59 (MEVPMDCPGCENKVRKALEKMNGVHDVQIDIKQQRVTVTGSAEQKKVLKVARNVTKRDI) constitute an HMA domain. Residues Cys7 and Cys10 each contribute to the a metal cation site. The residue at position 138 (Cys138) is a Cysteine methyl ester. The S-farnesyl cysteine moiety is linked to residue Cys138. A propeptide spans 139–141 (SIM) (removed in mature form).

The protein belongs to the HIPP family.

In terms of biological role, heavy-metal-binding protein. The protein is Heavy metal-associated isoprenylated plant protein 29 of Arabidopsis thaliana (Mouse-ear cress).